The chain runs to 919 residues: Isoleucine--tRNA ligase (919 aa).

Positions 57–67 (PYANGHIHIGT) match the 'HIGH' region motif. Residue Glu553 coordinates L-isoleucyl-5'-AMP. The 'KMSKS' region motif lies at 594–598 (KMSKS). Lys597 is a binding site for ATP. Zn(2+)-binding residues include Cys887, Cys890, Cys907, and Cys910.

Belongs to the class-I aminoacyl-tRNA synthetase family. IleS type 1 subfamily. Monomer. It depends on Zn(2+) as a cofactor.

The protein resides in the cytoplasm. The enzyme catalyses tRNA(Ile) + L-isoleucine + ATP = L-isoleucyl-tRNA(Ile) + AMP + diphosphate. Catalyzes the attachment of isoleucine to tRNA(Ile). As IleRS can inadvertently accommodate and process structurally similar amino acids such as valine, to avoid such errors it has two additional distinct tRNA(Ile)-dependent editing activities. One activity is designated as 'pretransfer' editing and involves the hydrolysis of activated Val-AMP. The other activity is designated 'posttransfer' editing and involves deacylation of mischarged Val-tRNA(Ile). This chain is Isoleucine--tRNA ligase, found in Thermotoga petrophila (strain ATCC BAA-488 / DSM 13995 / JCM 10881 / RKU-1).